The sequence spans 294 residues: Large ribosomal subunit protein uL2c (294 aa).

The segment at 224–249 (VMNPVDHPHGGGGEGKSPIGRSRPVT) is disordered.

It belongs to the universal ribosomal protein uL2 family. Part of the 50S ribosomal subunit.

Its subcellular location is the plastid. It is found in the chloroplast. In Porphyra purpurea (Red seaweed), this protein is Large ribosomal subunit protein uL2c (rpl2).